The primary structure comprises 451 residues: Tubulin alpha chain (451 aa).

Gln-11 is a GTP binding site. Lys-40 carries the N6-acetyllysine modification. GTP-binding residues include Glu-71, Gly-144, Thr-145, Thr-179, Asn-206, and Asn-228. Glu-71 is a binding site for Mg(2+). Residue Glu-254 is part of the active site.

This sequence belongs to the tubulin family. Dimer of alpha and beta chains. A typical microtubule is a hollow water-filled tube with an outer diameter of 25 nm and an inner diameter of 15 nM. Alpha-beta heterodimers associate head-to-tail to form protofilaments running lengthwise along the microtubule wall with the beta-tubulin subunit facing the microtubule plus end conferring a structural polarity. Microtubules usually have 13 protofilaments but different protofilament numbers can be found in some organisms and specialized cells. Mg(2+) serves as cofactor. In terms of processing, undergoes a tyrosination/detyrosination cycle, the cyclic removal and re-addition of a C-terminal tyrosine residue by the enzymes tubulin tyrosine carboxypeptidase (TTCP) and tubulin tyrosine ligase (TTL), respectively. Post-translationally, acetylation of alpha chains at Lys-40 stabilizes microtubules and affects affinity and processivity of microtubule motors. This modification has a role in multiple cellular functions, ranging from cell motility, cell cycle progression or cell differentiation to intracellular trafficking and signaling.

The protein localises to the cytoplasm. It is found in the cytoskeleton. The enzyme catalyses GTP + H2O = GDP + phosphate + H(+). Its function is as follows. Tubulin is the major constituent of microtubules, a cylinder consisting of laterally associated linear protofilaments composed of alpha- and beta-tubulin heterodimers. Microtubules grow by the addition of GTP-tubulin dimers to the microtubule end, where a stabilizing cap forms. Below the cap, tubulin dimers are in GDP-bound state, owing to GTPase activity of alpha-tubulin. The polypeptide is Tubulin alpha chain (TUBA) (Triticum aestivum (Wheat)).